Reading from the N-terminus, the 334-residue chain is Holliday junction branch migration complex subunit RuvB (334 aa).

The segment at 1–182 (MDDRMVDQSM…FGVHLRLEYY (182 aa)) is large ATPase domain (RuvB-L). ATP-binding positions include L21, R22, G63, K66, T67, T68, 129–131 (EDF), R172, Y182, and R219. T67 provides a ligand contact to Mg(2+). A small ATPAse domain (RuvB-S) region spans residues 183-253 (QELELKEIIV…TTRASLQLLQ (71 aa)). The segment at 256–334 (DEGLDYIDHK…HFSKKNGKKE (79 aa)) is head domain (RuvB-H). R292, R311, and R316 together coordinate DNA.

This sequence belongs to the RuvB family. Homohexamer. Forms an RuvA(8)-RuvB(12)-Holliday junction (HJ) complex. HJ DNA is sandwiched between 2 RuvA tetramers; dsDNA enters through RuvA and exits via RuvB. An RuvB hexamer assembles on each DNA strand where it exits the tetramer. Each RuvB hexamer is contacted by two RuvA subunits (via domain III) on 2 adjacent RuvB subunits; this complex drives branch migration. In the full resolvosome a probable DNA-RuvA(4)-RuvB(12)-RuvC(2) complex forms which resolves the HJ.

The protein localises to the cytoplasm. It carries out the reaction ATP + H2O = ADP + phosphate + H(+). In terms of biological role, the RuvA-RuvB-RuvC complex processes Holliday junction (HJ) DNA during genetic recombination and DNA repair, while the RuvA-RuvB complex plays an important role in the rescue of blocked DNA replication forks via replication fork reversal (RFR). RuvA specifically binds to HJ cruciform DNA, conferring on it an open structure. The RuvB hexamer acts as an ATP-dependent pump, pulling dsDNA into and through the RuvAB complex. RuvB forms 2 homohexamers on either side of HJ DNA bound by 1 or 2 RuvA tetramers; 4 subunits per hexamer contact DNA at a time. Coordinated motions by a converter formed by DNA-disengaged RuvB subunits stimulates ATP hydrolysis and nucleotide exchange. Immobilization of the converter enables RuvB to convert the ATP-contained energy into a lever motion, pulling 2 nucleotides of DNA out of the RuvA tetramer per ATP hydrolyzed, thus driving DNA branch migration. The RuvB motors rotate together with the DNA substrate, which together with the progressing nucleotide cycle form the mechanistic basis for DNA recombination by continuous HJ branch migration. Branch migration allows RuvC to scan DNA until it finds its consensus sequence, where it cleaves and resolves cruciform DNA. This chain is Holliday junction branch migration complex subunit RuvB, found in Staphylococcus saprophyticus subsp. saprophyticus (strain ATCC 15305 / DSM 20229 / NCIMB 8711 / NCTC 7292 / S-41).